Reading from the N-terminus, the 250-residue chain is tRNA (guanine-N(1)-)-methyltransferase (250 aa).

S-adenosyl-L-methionine-binding positions include glycine 116 and 136-141 (IGDYVL).

This sequence belongs to the RNA methyltransferase TrmD family. As to quaternary structure, homodimer.

The protein resides in the cytoplasm. It carries out the reaction guanosine(37) in tRNA + S-adenosyl-L-methionine = N(1)-methylguanosine(37) in tRNA + S-adenosyl-L-homocysteine + H(+). Functionally, specifically methylates guanosine-37 in various tRNAs. In Pseudomonas putida (strain W619), this protein is tRNA (guanine-N(1)-)-methyltransferase.